The following is a 327-amino-acid chain: Replication factor C small subunit (327 aa).

47 to 54 (GPPGTGKT) contributes to the ATP binding site.

Belongs to the activator 1 small subunits family. RfcS subfamily. Heteromultimer composed of small subunits (RfcS) and large subunits (RfcL).

In terms of biological role, part of the RFC clamp loader complex which loads the PCNA sliding clamp onto DNA. This is Replication factor C small subunit from Sulfurisphaera tokodaii (strain DSM 16993 / JCM 10545 / NBRC 100140 / 7) (Sulfolobus tokodaii).